The following is a 312-amino-acid chain: MKVAVLGAAGGIGQALALLLKNQLPSGSELSLYDIAPVTPGVAVDLSHIPTAVKIKGFSGEDATPALEGADVVLISAGVARKPGMDRSDLFNVNAGIVKNLVQQIAKTCPKACVGIITNPVNTTVAIAAEVLKKAGVYDKNKLFGVTTLDIIRSNTFVAELKGKLPTEVEVPVIGGHSGVTILPLLSQIPGVSFTEQEAADLTKRIQNAGTEVVEAKAGGGSATLSMGQAAARFGLSLVRALQGETGVVECAYVEGDGQYARFFSQPLLLGKNGVEERKSIGTLSAFEQRSLEGMLDTLKKDITLGEEFVTK.

NAD(+) contacts are provided by residues 7–13 (GAAGGIG) and aspartate 34. Substrate is bound by residues arginine 81 and arginine 87. NAD(+) is bound by residues asparagine 94 and 117–119 (ITN). Substrate contacts are provided by asparagine 119 and arginine 153. The active-site Proton acceptor is the histidine 177. NAD(+) is bound at residue methionine 227.

Belongs to the LDH/MDH superfamily. MDH type 1 family. As to quaternary structure, homodimer.

The enzyme catalyses (S)-malate + NAD(+) = oxaloacetate + NADH + H(+). Catalyzes the reversible oxidation of malate to oxaloacetate. This Salmonella arizonae (strain ATCC BAA-731 / CDC346-86 / RSK2980) protein is Malate dehydrogenase.